The following is a 516-amino-acid chain: GMP synthase [glutamine-hydrolyzing] (516 aa).

The region spanning 8–198 (KILILDFGSQ…VVNICGCDTL (191 aa)) is the Glutamine amidotransferase type-1 domain. Residue Cys84 is the Nucleophile of the active site. Residues His172 and Glu174 contribute to the active site. Residues 199–391 (WNIENIIEND…LGLPYNMLYR (193 aa)) enclose the GMPS ATP-PPase domain. ATP is bound at residue 226-232 (SGGVDSS).

Homodimer.

The enzyme catalyses XMP + L-glutamine + ATP + H2O = GMP + L-glutamate + AMP + diphosphate + 2 H(+). It participates in purine metabolism; GMP biosynthesis; GMP from XMP (L-Gln route): step 1/1. Functionally, catalyzes the synthesis of GMP from XMP. The polypeptide is GMP synthase [glutamine-hydrolyzing] (Francisella tularensis subsp. tularensis (strain WY96-3418)).